Consider the following 726-residue polypeptide: Catalase-peroxidase (726 aa).

The tract at residues 1–33 (MSTSDDIHNTTATGKCPFHQGGHDQSAGAGTTT) is disordered. A cross-link (tryptophyl-tyrosyl-methioninium (Trp-Tyr) (with M-252)) is located at residues 105–226 (WHGAGTYRSI…LGATEMGLIY (122 aa)). Catalysis depends on histidine 106, which acts as the Proton acceptor. Positions 226–252 (YVNPEGPDHSGEPLSAAAAIRATFGNM) form a cross-link, tryptophyl-tyrosyl-methioninium (Tyr-Met) (with W-105). A heme b-binding site is contributed by histidine 267.

Belongs to the peroxidase family. Peroxidase/catalase subfamily. In terms of assembly, homodimer or homotetramer. It depends on heme b as a cofactor. Post-translationally, formation of the three residue Trp-Tyr-Met cross-link is important for the catalase, but not the peroxidase activity of the enzyme.

The catalysed reaction is H2O2 + AH2 = A + 2 H2O. The enzyme catalyses 2 H2O2 = O2 + 2 H2O. Bifunctional enzyme with both catalase and broad-spectrum peroxidase activity. The sequence is that of Catalase-peroxidase from Shigella flexneri.